Here is a 238-residue protein sequence, read N- to C-terminus: Ubiquinone biosynthesis O-methyltransferase (238 aa).

S-adenosyl-L-methionine-binding residues include Arg-39, Gly-58, Asp-79, and Met-123.

Belongs to the methyltransferase superfamily. UbiG/COQ3 family.

It catalyses the reaction a 3-demethylubiquinol + S-adenosyl-L-methionine = a ubiquinol + S-adenosyl-L-homocysteine + H(+). The enzyme catalyses a 3-(all-trans-polyprenyl)benzene-1,2-diol + S-adenosyl-L-methionine = a 2-methoxy-6-(all-trans-polyprenyl)phenol + S-adenosyl-L-homocysteine + H(+). It functions in the pathway cofactor biosynthesis; ubiquinone biosynthesis. O-methyltransferase that catalyzes the 2 O-methylation steps in the ubiquinone biosynthetic pathway. The protein is Ubiquinone biosynthesis O-methyltransferase of Hahella chejuensis (strain KCTC 2396).